Here is a 147-residue protein sequence, read N- to C-terminus: Large ribosomal subunit protein uL22c (147 aa).

This sequence belongs to the universal ribosomal protein uL22 family. As to quaternary structure, part of the 50S ribosomal subunit.

Its subcellular location is the plastid. This protein binds specifically to 23S rRNA. Its function is as follows. The globular domain of the protein is located near the polypeptide exit tunnel on the outside of the subunit, while an extended beta-hairpin is found that lines the wall of the exit tunnel in the center of the 70S ribosome. This Cuscuta obtusiflora (Peruvian dodder) protein is Large ribosomal subunit protein uL22c (rpl22).